Reading from the N-terminus, the 442-residue chain is MHIDNAITTTIETKTWRKSDTTWTLGLFGTAIGAGVLFFPIRAGFGGLIPILIMLVLAYPIAFLCHRALARLCLSGSNCSGNITETVEEHFGKTGGVVITFLYFFAICPLLWIYGVTITNTFMTFWENQLQLAPLNRGVVALALLLLMAVVIYFGKDLMVKVMSFLVFPFIACLVLISLSLIPYWNASVIEQVDLSQISLLGHDGILVTVWLGISIMVFSFNFSPIVSSFVVSKREEYEPEFGREYTEKKCSQIISRASILMVAVVMFFAFSCLFTLSPQNMAEAKAQNIPVLSYLANHFSSMAGSRSTFSITLEYAASLIALVAIFKSFFGHYLGTLEGLNGLVIKFGYKGDKTKISSGKLNLISMFFIMGSTWLVAYINPNILDLIEAMGAPIIASLLCLLPMYAIHKLPSLARFRGRPENYFVTIVGLLTIFNIVYKLL.

11 helical membrane passes run T21 to I41, G44 to L64, G96 to V116, V139 to M159, V162 to I182, I206 to I226, A258 to S278, I312 to G332, L364 to I384, I388 to I408, and E422 to L442.

It belongs to the amino acid/polyamine transporter 2 family. SdaC/TdcC subfamily.

The protein resides in the cell inner membrane. The enzyme catalyses L-threonine(in) + H(+)(in) = L-threonine(out) + H(+)(out). It catalyses the reaction L-serine(in) + H(+)(in) = L-serine(out) + H(+)(out). In terms of biological role, involved in the import of threonine and serine into the cell, with the concomitant import of a proton (symport system). In Yersinia enterocolitica serotype O:8 / biotype 1B (strain NCTC 13174 / 8081), this protein is Threonine/serine transporter TdcC.